Here is a 101-residue protein sequence, read N- to C-terminus: UPF0235 protein MMP1055 (101 aa).

The protein belongs to the UPF0235 family.

In Methanococcus maripaludis (strain DSM 14266 / JCM 13030 / NBRC 101832 / S2 / LL), this protein is UPF0235 protein MMP1055.